A 248-amino-acid polypeptide reads, in one-letter code: Neurotrophic factor BDNF precursor form (248 aa).

The signal sequence occupies residues 1–18 (MTILFLTMVISYFSCMKA). The propeptide occupies 19–129 (APMKEANVRG…AANMSMRVRR (111 aa)). Asparagine 122 is a glycosylation site (N-linked (GlcNAc...) asparagine). 3 disulfide bridges follow: cysteine 142-cysteine 209, cysteine 187-cysteine 238, and cysteine 197-cysteine 240.

The protein belongs to the NGF-beta family. Monomers and homodimers. Binds to NTRK2/TRKB. Can form heterodimers with other neurotrophin family members, such as NTF3 and NTF4 (in vitro), but the physiological relevance of this is not clear. BDNF precursor form: interacts with the heterodimer formed by NGFR and SORCS2. Mature BDNF has much lower affinity for the heterodimer formed by NGFR and SORCS2. N-glycosylated and glycosulfated, contrary to mature BDNF. In terms of processing, mature BDNF is produced by proteolytic removal of the propeptide, catalyzed by a FURIN family member. In addition, the precursor form is proteolytically cleaved within the propeptide, but this is not an obligatory intermediate for the production of mature BDNF. Can be converted into mature BDNF by plasmin (PLG).

It localises to the secreted. Important signaling molecule that activates signaling cascades downstream of NTRK2. During development, promotes the survival and differentiation of selected neuronal populations of the peripheral and central nervous systems. Participates in axonal growth, pathfinding and in the modulation of dendritic growth and morphology. Major regulator of synaptic transmission and plasticity at adult synapses in many regions of the CNS. The versatility of BDNF is emphasized by its contribution to a range of adaptive neuronal responses including long-term potentiation (LTP), long-term depression (LTD), certain forms of short-term synaptic plasticity, as well as homeostatic regulation of intrinsic neuronal excitability. Functionally, important signaling molecule that activates signaling cascades downstream of NTRK2. Activates signaling cascades via the heterodimeric receptor formed by NGFR and SORCS2. Signaling via NGFR and SORCS2 plays a role in synaptic plasticity and long-term depression (LTD). Binding to NGFR and SORCS2 promotes neuronal apoptosis. Promotes neuronal growth cone collapse. The polypeptide is Neurotrophic factor BDNF precursor form (BDNF) (Lipotes vexillifer (Yangtze river dolphin)).